Consider the following 417-residue polypeptide: Serine hydroxymethyltransferase (417 aa).

Residues Leu121 and 125 to 127 (GHL) each bind (6S)-5,6,7,8-tetrahydrofolate. An N6-(pyridoxal phosphate)lysine modification is found at Lys230. 355–357 (SPF) provides a ligand contact to (6S)-5,6,7,8-tetrahydrofolate.

Belongs to the SHMT family. In terms of assembly, homodimer. Pyridoxal 5'-phosphate serves as cofactor.

It is found in the cytoplasm. The enzyme catalyses (6R)-5,10-methylene-5,6,7,8-tetrahydrofolate + glycine + H2O = (6S)-5,6,7,8-tetrahydrofolate + L-serine. It participates in one-carbon metabolism; tetrahydrofolate interconversion. It functions in the pathway amino-acid biosynthesis; glycine biosynthesis; glycine from L-serine: step 1/1. In terms of biological role, catalyzes the reversible interconversion of serine and glycine with tetrahydrofolate (THF) serving as the one-carbon carrier. This reaction serves as the major source of one-carbon groups required for the biosynthesis of purines, thymidylate, methionine, and other important biomolecules. Also exhibits THF-independent aldolase activity toward beta-hydroxyamino acids, producing glycine and aldehydes, via a retro-aldol mechanism. This chain is Serine hydroxymethyltransferase, found in Nitrosococcus oceani (strain ATCC 19707 / BCRC 17464 / JCM 30415 / NCIMB 11848 / C-107).